The primary structure comprises 1910 residues: C2 domain-containing protein (1910 aa).

Positions 1–28 (MMKLKEMVEAAEAKVESKPPQAAEEKAP) are enriched in basic and acidic residues. 3 disordered regions span residues 1–54 (MMKL…EPLD), 355–377 (AMKLPNRGTRSPSGLESNRPEDG), and 398–428 (LEELPASLRPPLSKRRKGEDKKDGNKADGPQ). Over residues 414-423 (KGEDKKDGNK) the composition is skewed to basic and acidic residues. Positions 557 to 678 (QLGEVSESDS…FFNEKHNKRN (122 aa)) constitute a C2 domain. 2 stretches are compositionally biased toward basic and acidic residues: residues 1192–1205 (LAQKEKQSREDAQR) and 1215–1228 (GHEGADNGAEDKQG). 6 disordered regions span residues 1192 to 1267 (LAQK…VKKG), 1405 to 1424 (ATAGEGEQQTSEGIPTRDMQ), 1431 to 1654 (LEEA…SMGA), 1666 to 1747 (QRKH…FLSS), 1822 to 1841 (AKEEKDLIARQPPPARDWSD), and 1879 to 1910 (DACSRRAESSNESRTTAGAKLRQQQLDLAGRT). Composition is skewed to low complexity over residues 1239-1257 (AAAAAVAEESVSAEAVQGA) and 1405-1414 (ATAGEGEQQT). The segment covering 1440 to 1469 (KKKKKKEKKEKKEKKEKKEKKEKKEKKKKK) has biased composition (basic residues). Low complexity predominate over residues 1492-1502 (PAAAIPSVLLP). Residues 1517-1526 (KKEKKEKKKK) are compositionally biased toward basic residues. Residues 1550–1561 (PAAAIPSILLPA) are compositionally biased toward low complexity. The segment covering 1569–1584 (EKPKEKKTEKKKEKHT) has biased composition (basic and acidic residues). Positions 1595-1604 (LPESETTAVV) are enriched in polar residues. 2 stretches are compositionally biased toward low complexity: residues 1620 to 1629 (VPSSIASSEA) and 1675 to 1698 (SSSSSSEVSASSASSLSPSSSSSS). Positions 1701–1711 (AETRAKADALR) are enriched in basic and acidic residues. Composition is skewed to low complexity over residues 1712 to 1722 (ARLQAAQARLA) and 1729 to 1747 (VSSSETESSETSEASFLSS). Residues 1766–1828 (QQRLQKMVSG…TRRAKEEKDL (63 aa)) are a coiled coil. A compositionally biased stretch (polar residues) spans 1890-1904 (ESRTTAGAKLRQQQL).

The protein resides in the membrane. Regulates microneme secretion. Probably involved in regulation of rhoptry and dense granule secretion. This Toxoplasma gondii protein is C2 domain-containing protein.